Reading from the N-terminus, the 186-residue chain is Putative thiamine-phosphate synthase 2 (186 aa).

4-amino-2-methyl-5-(diphosphooxymethyl)pyrimidine-binding positions include 35–39 and Asn67; that span reads QLREK. Glu68 provides a ligand contact to Mg(2+). Ser105 contributes to the 4-amino-2-methyl-5-(diphosphooxymethyl)pyrimidine binding site. 131–133 lines the 2-[(2R,5Z)-2-carboxy-4-methylthiazol-5(2H)-ylidene]ethyl phosphate pocket; that stretch reads TSS. His134 is a 4-amino-2-methyl-5-(diphosphooxymethyl)pyrimidine binding site. Residues Gly161 and 181-182 contribute to the 2-[(2R,5Z)-2-carboxy-4-methylthiazol-5(2H)-ylidene]ethyl phosphate site; that span reads IS.

Belongs to the thiamine-phosphate synthase family. It depends on Mg(2+) as a cofactor.

The enzyme catalyses 2-[(2R,5Z)-2-carboxy-4-methylthiazol-5(2H)-ylidene]ethyl phosphate + 4-amino-2-methyl-5-(diphosphooxymethyl)pyrimidine + 2 H(+) = thiamine phosphate + CO2 + diphosphate. It carries out the reaction 2-(2-carboxy-4-methylthiazol-5-yl)ethyl phosphate + 4-amino-2-methyl-5-(diphosphooxymethyl)pyrimidine + 2 H(+) = thiamine phosphate + CO2 + diphosphate. It catalyses the reaction 4-methyl-5-(2-phosphooxyethyl)-thiazole + 4-amino-2-methyl-5-(diphosphooxymethyl)pyrimidine + H(+) = thiamine phosphate + diphosphate. Its pathway is cofactor biosynthesis; thiamine diphosphate biosynthesis; thiamine phosphate from 4-amino-2-methyl-5-diphosphomethylpyrimidine and 4-methyl-5-(2-phosphoethyl)-thiazole: step 1/1. Its function is as follows. Condenses 4-methyl-5-(beta-hydroxyethyl)thiazole monophosphate (THZ-P) and 2-methyl-4-amino-5-hydroxymethyl pyrimidine pyrophosphate (HMP-PP) to form thiamine monophosphate (TMP). This Aquifex aeolicus (strain VF5) protein is Putative thiamine-phosphate synthase 2 (thiE2).